Consider the following 249-residue polypeptide: uncharacterized protein (249 aa).

The 68-residue stretch at Val-4 to Pro-71 folds into the S4 RNA-binding domain. Asp-106 (nucleophile) is an active-site residue.

Belongs to the pseudouridine synthase RsuA family.

The catalysed reaction is a uridine in RNA = a pseudouridine in RNA. This is an uncharacterized protein from Aquifex aeolicus (strain VF5).